The sequence spans 671 residues: Sodium, potassium, lithium and rubidium/H(+) antiporter (671 aa).

Transmembrane regions (helical) follow at residues 7 to 29 (VLVL…FIPV), 46 to 66 (GLHI…PLLF), 83 to 103 (PILL…GYTI), 110 to 130 (IPLP…VVAV), 156 to 176 (ASGL…AFSI), 182 to 202 (SFVL…FFII), 228 to 248 (FVIY…VVAG), 276 to 296 (IILF…IPDV), 315 to 335 (ILII…LFWA), 364 to 384 (GAVT…GSPF), and 389 to 409 (LIIF…SVLL).

It belongs to the monovalent cation:proton antiporter 1 (CPA1) transporter (TC 2.A.36) family. Nhak (TC 2.A.36.3.2) subfamily.

It is found in the cell membrane. Functionally, transporter involved in the efflux of sodium, potassium, lithium and rubidium. The protein is Sodium, potassium, lithium and rubidium/H(+) antiporter (nhaK) of Bacillus pumilus (strain SAFR-032).